The primary structure comprises 218 residues: Transmembrane gamma-carboxyglutamic acid protein 1 (218 aa).

The propeptide occupies 1–20 (MGRVFLTGEKANSILKRYPR). The Gla domain maps to 21-66 (ANGFFEEIRQGNIERECKEEFCTFEEAREAFENNEKTKEFWSTYTK). Topologically, residues 21-83 (ANGFFEEIRQ…RGSDWFQFYL (63 aa)) are extracellular. C37 and C42 are disulfide-bonded. The chain crosses the membrane as a helical span at residues 84–106 (TFPLIFGLFIILLVIFLIWRCFL). Topologically, residues 107–218 (RNKTRRQTVT…PMVPVVTTIK (112 aa)) are cytoplasmic. The tract at residues 161-195 (TRLSNCDPPPTYEEATGQVNLQRSETEPHLDPPPE) is disordered.

Post-translationally, gla residues are produced after subsequent post-translational modifications of glutamate by a vitamin K-dependent gamma-carboxylase. Highly expressed in the spinal cord.

The protein resides in the membrane. The sequence is that of Transmembrane gamma-carboxyglutamic acid protein 1 (PRRG1) from Homo sapiens (Human).